The sequence spans 241 residues: Uridylate kinase (241 aa).

ATP is bound at residue 15 to 18 (KMSG). Glycine 57 contacts UMP. Residues glycine 58 and arginine 62 each contribute to the ATP site. Residues aspartate 77 and 138-145 (TGNPFFTT) contribute to the UMP site. Positions 165, 171, and 174 each coordinate ATP.

The protein belongs to the UMP kinase family. Homohexamer.

It is found in the cytoplasm. It catalyses the reaction UMP + ATP = UDP + ADP. It participates in pyrimidine metabolism; CTP biosynthesis via de novo pathway; UDP from UMP (UMPK route): step 1/1. Its activity is regulated as follows. Inhibited by UTP. Catalyzes the reversible phosphorylation of UMP to UDP. In Dichelobacter nodosus (strain VCS1703A), this protein is Uridylate kinase.